Reading from the N-terminus, the 237-residue chain is tRNA (guanine-N(7)-)-methyltransferase (237 aa).

S-adenosyl-L-methionine-binding residues include Glu67, Glu92, Asp119, and Asp142. Residue Asp142 is part of the active site. Residues Lys146, Asp178, and 215 to 218 contribute to the substrate site; that span reads TKFE.

Belongs to the class I-like SAM-binding methyltransferase superfamily. TrmB family.

The enzyme catalyses guanosine(46) in tRNA + S-adenosyl-L-methionine = N(7)-methylguanosine(46) in tRNA + S-adenosyl-L-homocysteine. It functions in the pathway tRNA modification; N(7)-methylguanine-tRNA biosynthesis. Catalyzes the formation of N(7)-methylguanine at position 46 (m7G46) in tRNA. This chain is tRNA (guanine-N(7)-)-methyltransferase, found in Aeromonas hydrophila subsp. hydrophila (strain ATCC 7966 / DSM 30187 / BCRC 13018 / CCUG 14551 / JCM 1027 / KCTC 2358 / NCIMB 9240 / NCTC 8049).